We begin with the raw amino-acid sequence, 371 residues long: Chaperone protein DnaJ (371 aa).

A J domain is found at 4–68; sequence DYYKILGVSK…QKRAAYDRFG (65 aa). The CR-type zinc-finger motif lies at 134 to 212; it reads GIEKNISFSS…CHGMGRCHKQ (79 aa). Zn(2+) contacts are provided by cysteine 147, cysteine 150, cysteine 164, cysteine 167, cysteine 186, cysteine 189, cysteine 200, and cysteine 203. CXXCXGXG motif repeat units follow at residues 147–154, 164–171, 186–193, and 200–207; these read CDTCHGSG, CDACGGVG, CHKCKGNG, and CKKCHGMG.

The protein belongs to the DnaJ family. As to quaternary structure, homodimer. The cofactor is Zn(2+).

The protein localises to the cytoplasm. Functionally, participates actively in the response to hyperosmotic and heat shock by preventing the aggregation of stress-denatured proteins and by disaggregating proteins, also in an autonomous, DnaK-independent fashion. Unfolded proteins bind initially to DnaJ; upon interaction with the DnaJ-bound protein, DnaK hydrolyzes its bound ATP, resulting in the formation of a stable complex. GrpE releases ADP from DnaK; ATP binding to DnaK triggers the release of the substrate protein, thus completing the reaction cycle. Several rounds of ATP-dependent interactions between DnaJ, DnaK and GrpE are required for fully efficient folding. Also involved, together with DnaK and GrpE, in the DNA replication of plasmids through activation of initiation proteins. The protein is Chaperone protein DnaJ of Rickettsia akari (strain Hartford).